A 389-amino-acid polypeptide reads, in one-letter code: 23S rRNA (uracil(747)-C(5))-methyltransferase RlmC (389 aa).

4 residues coordinate [4Fe-4S] cluster: C5, C13, C16, and C94. S-adenosyl-L-methionine-binding residues include Q219, F248, E275, and N321. The Nucleophile role is filled by C348.

It belongs to the class I-like SAM-binding methyltransferase superfamily. RNA M5U methyltransferase family. RlmC subfamily.

It carries out the reaction uridine(747) in 23S rRNA + S-adenosyl-L-methionine = 5-methyluridine(747) in 23S rRNA + S-adenosyl-L-homocysteine + H(+). In terms of biological role, catalyzes the formation of 5-methyl-uridine at position 747 (m5U747) in 23S rRNA. In Mannheimia succiniciproducens (strain KCTC 0769BP / MBEL55E), this protein is 23S rRNA (uracil(747)-C(5))-methyltransferase RlmC.